A 465-amino-acid chain; its full sequence is Hexokinase type 1 (465 aa).

Positions 8-447 (EEDFPEVYKV…CGVGAAIMAG (440 aa)) constitute a Hexokinase domain. Positions 65–197 (TGRERGQFLA…EISVDVMGII (133 aa)) are hexokinase small subdomain. K88 is a binding site for ATP. The glucose-binding stretch occupies residues 139–165 (PLGIAFAFTLKKLALDVGILVSWTKEF). Residues 198–436 (NVGAGSLLAL…YNFEFVITQD (239 aa)) form a hexokinase large subdomain region.

This sequence belongs to the hexokinase family.

The catalysed reaction is a D-hexose + ATP = a D-hexose 6-phosphate + ADP + H(+). The enzyme catalyses D-mannose + ATP = D-mannose 6-phosphate + ADP + H(+). It carries out the reaction D-fructose + ATP = D-fructose 6-phosphate + ADP + H(+). It catalyses the reaction D-glucose + ATP = D-glucose 6-phosphate + ADP + H(+). The protein operates within carbohydrate metabolism; hexose metabolism. Its pathway is carbohydrate degradation; glycolysis; D-glyceraldehyde 3-phosphate and glycerone phosphate from D-glucose: step 1/4. Functionally, catalyzes the phosphorylation of various hexoses to hexose 6-phosphate. This chain is Hexokinase type 1 (Hex-t1), found in Drosophila melanogaster (Fruit fly).